We begin with the raw amino-acid sequence, 236 residues long: Thiamine import ATP-binding protein ThiQ (236 aa).

In terms of domain architecture, ABC transporter spans 2-230; it reads LKLEKITYLY…SAAKASVLGI (229 aa). 32-39 is a binding site for ATP; that stretch reads GPSGAGKS.

It belongs to the ABC transporter superfamily. Thiamine importer (TC 3.A.1.19.1) family. As to quaternary structure, the complex is composed of two ATP-binding proteins (ThiQ), two transmembrane proteins (ThiP) and a solute-binding protein (ThiB).

It is found in the cell inner membrane. It carries out the reaction thiamine(out) + ATP + H2O = thiamine(in) + ADP + phosphate + H(+). Part of the ABC transporter complex ThiBPQ involved in thiamine import. Responsible for energy coupling to the transport system. The polypeptide is Thiamine import ATP-binding protein ThiQ (Yersinia pestis bv. Antiqua (strain Antiqua)).